The sequence spans 96 residues: Small ribosomal subunit protein bS6 (96 aa).

Belongs to the bacterial ribosomal protein bS6 family.

In terms of biological role, binds together with bS18 to 16S ribosomal RNA. This chain is Small ribosomal subunit protein bS6, found in Streptococcus suis (strain 98HAH33).